The primary structure comprises 104 residues: Large ribosomal subunit protein uL24 (104 aa).

This sequence belongs to the universal ribosomal protein uL24 family. Part of the 50S ribosomal subunit.

One of two assembly initiator proteins, it binds directly to the 5'-end of the 23S rRNA, where it nucleates assembly of the 50S subunit. Functionally, one of the proteins that surrounds the polypeptide exit tunnel on the outside of the subunit. This Shewanella sp. (strain W3-18-1) protein is Large ribosomal subunit protein uL24.